The primary structure comprises 830 residues: Lon protease 3 (830 aa).

The Lon N-terminal domain occupies 19 to 213; sequence VPLLPLRDII…RLIELMQAEI (195 aa). 367–374 is a binding site for ATP; that stretch reads GPPGVGKT. The Lon proteolytic domain occupies 604–784; sequence RDEVGLVNGL…DDVLREALIL (181 aa). Catalysis depends on residues Ser690 and Lys733. Residues 811–823 are compositionally biased toward low complexity; sequence PVKAPPAAAGEPT. The disordered stretch occupies residues 811–830; the sequence is PVKAPPAAAGEPTPAAPPGA.

The protein belongs to the peptidase S16 family. As to quaternary structure, homohexamer. Organized in a ring with a central cavity.

It is found in the cytoplasm. The catalysed reaction is Hydrolysis of proteins in presence of ATP.. Its function is as follows. ATP-dependent serine protease that mediates the selective degradation of mutant and abnormal proteins as well as certain short-lived regulatory proteins. Required for cellular homeostasis and for survival from DNA damage and developmental changes induced by stress. Degrades polypeptides processively to yield small peptide fragments that are 5 to 10 amino acids long. Binds to DNA in a double-stranded, site-specific manner. This chain is Lon protease 3, found in Sorangium cellulosum (strain So ce56) (Polyangium cellulosum (strain So ce56)).